The chain runs to 312 residues: 4-diphosphocytidyl-2-C-methyl-D-erythritol kinase (312 aa).

The active site involves Lys10. Residue 105–115 (PVAGGMAGGSA) participates in ATP binding. Residue Asp146 is part of the active site.

It belongs to the GHMP kinase family. IspE subfamily.

It carries out the reaction 4-CDP-2-C-methyl-D-erythritol + ATP = 4-CDP-2-C-methyl-D-erythritol 2-phosphate + ADP + H(+). Its pathway is isoprenoid biosynthesis; isopentenyl diphosphate biosynthesis via DXP pathway; isopentenyl diphosphate from 1-deoxy-D-xylulose 5-phosphate: step 3/6. Catalyzes the phosphorylation of the position 2 hydroxy group of 4-diphosphocytidyl-2C-methyl-D-erythritol. The chain is 4-diphosphocytidyl-2-C-methyl-D-erythritol kinase from Corynebacterium glutamicum (strain R).